Here is a 377-residue protein sequence, read N- to C-terminus: Opsin-1 (377 aa).

Residues M1–G58 lie on the Extracellular side of the membrane. N24 carries N-linked (GlcNAc...) asparagine glycosylation. The helical transmembrane segment at F59–F79 threads the bilayer. The Cytoplasmic portion of the chain corresponds to M80–L92. A helical membrane pass occupies residues V93 to V113. The Extracellular segment spans residues N114–L129. C127 and C204 are oxidised to a cystine. The helical transmembrane segment at Y130–F150 threads the bilayer. Residues D151–G169 lie on the Cytoplasmic side of the membrane. Residues A170 to F190 form a helical membrane-spanning segment. At G191–L220 the chain is on the extracellular side. N200 is a glycosylation site (N-linked (GlcNAc...) asparagine). Residues I221–I241 traverse the membrane as a helical segment. Residues V242–K280 are Cytoplasmic-facing. Residues V281–Y301 traverse the membrane as a helical segment. The Extracellular portion of the chain corresponds to T302–P312. A helical membrane pass occupies residues L313–I335. Residues S336–A377 are Cytoplasmic-facing. A disordered region spans residues P357–A377.

It belongs to the G-protein coupled receptor 1 family. Opsin subfamily. In the retina, expression is abundant and uniform in the anterior-posterior and oblique cells of the retinulae, with some expression in the proximal cells. There is no expression in the dorsal rim retinulae (at protein level).

Its subcellular location is the cell projection. It localises to the rhabdomere membrane. In terms of biological role, visual pigments are the light-absorbing molecules that mediate vision. They consist of an apoprotein, opsin, covalently linked to cis-retinal. May play a role in photoperiodic photoreception. This Manduca sexta (Tobacco hawkmoth) protein is Opsin-1 (OP1).